We begin with the raw amino-acid sequence, 65 residues long: Large ribosomal subunit protein uL29 (65 aa).

It belongs to the universal ribosomal protein uL29 family.

The chain is Large ribosomal subunit protein uL29 from Lactobacillus johnsonii (strain CNCM I-12250 / La1 / NCC 533).